Here is a 598-residue protein sequence, read N- to C-terminus: Probable translation initiation factor IF-2 (598 aa).

Residues L3 to K225 enclose the tr-type G domain. The G1 stretch occupies residues G12–T19. G12–T19 contacts GTP. The interval G37–H41 is G2. Residues D76–G79 are G3. Residues D76 to H80 and N130 to D133 contribute to the GTP site. Positions N130 to D133 are G4. Residues S200–M202 form a G5 region.

This sequence belongs to the TRAFAC class translation factor GTPase superfamily. Classic translation factor GTPase family. IF-2 subfamily.

Function in general translation initiation by promoting the binding of the formylmethionine-tRNA to ribosomes. Seems to function along with eIF-2. The protein is Probable translation initiation factor IF-2 of Methanococcus maripaludis (strain C5 / ATCC BAA-1333).